The sequence spans 345 residues: Trace amine-associated receptor 6 (345 aa).

The Extracellular segment spans residues 1–32; the sequence is MGSNSSPPTVLQLCYENVTGSCVKTPYSPGSR. A glycan (N-linked (GlcNAc...) asparagine) is linked at N17. 2 disulfide bridges follow: C22–C186 and C105–C190. The helical transmembrane segment at 33-53 threads the bilayer; it reads VILYAVFGFGAVLAVFGNLMV. The Cytoplasmic segment spans residues 54-68; that stretch reads MISILHFKQLHSPTN. The helical transmembrane segment at 69-89 threads the bilayer; it reads FLIASLACADFGVGISVMPFS. Residues 90–107 are Extracellular-facing; it reads MVRSIESCWYFGRSFCTF. The helical transmembrane segment at 108–128 threads the bilayer; it reads HTCCDVAFCYSSLFHLSFISI. The Cytoplasmic segment spans residues 129–147; that stretch reads DRYIAVTDPLVYPTKFTVS. A helical transmembrane segment spans residues 148-168; it reads VSGICIGVSWILPLVYSGAVF. The Extracellular portion of the chain corresponds to 169–202; it reads YTGVYDDGLEELSSALNCVGGCQVVVNQNWVLID. The tract at residues 174–187 is extracellular Loop 2 (ECL2); that stretch reads DDGLEELSSALNCV. Residues 203–223 form a helical membrane-spanning segment; sequence FLSFLIPTLVMIILYGNIFLV. Residues 224-259 are Cytoplasmic-facing; sequence ARQQAKKIENIGSKTESSSESYKARVARRERKAAKT. A helical transmembrane segment spans residues 260-276; it reads LGITVVAFMISWLPYSI. Residues 277-282 are Extracellular-facing; that stretch reads DSLVDA. A helical transmembrane segment spans residues 283–302; that stretch reads FMGFITPAYIYEICVWCAYY. Over 303-345 the chain is Cytoplasmic; that stretch reads NSAMNPLIYALFYPWFKKAIKVIMSGQVFKNSSATMNLFSEQI.

The protein belongs to the G-protein coupled receptor 1 family. In terms of tissue distribution, specifically expressed in neurons of the olfactory epithelium, to discrete glomeruli predominantly localized to a confined bulb region. Present in a ventral area of the main olfactory epithelium.

It localises to the cell membrane. Its function is as follows. Olfactory receptor specific for trace amines, such as beta-phenylethylamine (beta-PEA). Trace amine compounds are enriched in animal body fluids and act on trace amine-associated receptors (TAARs) to elicit both intraspecific and interspecific innate behaviors. Beta-PEA-binding causes a conformation change that triggers signaling via G(s)-class of G alpha proteins (GNAL or GNAS). This is Trace amine-associated receptor 6 from Mus musculus (Mouse).